The following is a 250-amino-acid chain: Transcriptional activator protein EchR (250 aa).

Residues K173–N238 form the HTH luxR-type domain. The segment at residues Y197–G216 is a DNA-binding region (H-T-H motif).

The protein belongs to the autoinducer-regulated transcriptional regulatory protein family.

Functionally, functions as a potential ohlL-responsive transcriptional regulator. The protein is Transcriptional activator protein EchR (echR) of Dickeya chrysanthemi (Pectobacterium chrysanthemi).